The primary structure comprises 403 residues: Casein kinase I isoform delta-A (403 aa).

The 269-residue stretch at Tyr9–Phe277 folds into the Protein kinase domain. Residues Ile15–Ile23 and Lys38 each bind ATP. Residue Asp128 is the Proton acceptor of the active site. Residues Gln315–Pro340 are autoinhibitory. The tract at residues Arg322–Arg403 is disordered.

This sequence belongs to the protein kinase superfamily. As to quaternary structure, monomer. Interacts with per1 and per2. Component of the circadian core oscillator. Post-translationally, autophosphorylated on serine and threonine residues.

The protein localises to the cytoplasm. It is found in the nucleus. The enzyme catalyses L-seryl-[protein] + ATP = O-phospho-L-seryl-[protein] + ADP + H(+). It catalyses the reaction L-threonyl-[protein] + ATP = O-phospho-L-threonyl-[protein] + ADP + H(+). Its activity is regulated as follows. Exhibits substrate-dependent heparin activation. In terms of biological role, casein kinases are operationally defined by their preferential utilization of acidic proteins such as caseins as substrates. Central component of the circadian clock. May act as a negative regulator of circadian rhythmicity by phosphorylating per1 and per2, which may lead to their degradation. Participates in wnt signaling. The polypeptide is Casein kinase I isoform delta-A (csnk1da) (Danio rerio (Zebrafish)).